The primary structure comprises 351 residues: Histidinol-phosphate aminotransferase (351 aa).

Lys209 is subject to N6-(pyridoxal phosphate)lysine.

It belongs to the class-II pyridoxal-phosphate-dependent aminotransferase family. Histidinol-phosphate aminotransferase subfamily. As to quaternary structure, homodimer. It depends on pyridoxal 5'-phosphate as a cofactor.

It catalyses the reaction L-histidinol phosphate + 2-oxoglutarate = 3-(imidazol-4-yl)-2-oxopropyl phosphate + L-glutamate. It functions in the pathway amino-acid biosynthesis; L-histidine biosynthesis; L-histidine from 5-phospho-alpha-D-ribose 1-diphosphate: step 7/9. This Chromohalobacter salexigens (strain ATCC BAA-138 / DSM 3043 / CIP 106854 / NCIMB 13768 / 1H11) protein is Histidinol-phosphate aminotransferase.